Reading from the N-terminus, the 347-residue chain is MRIEQELKLGFKDVLFRPKRSTLKSRSQVNLTREFTFKHSGRQWSGVPVIAANMDSVGSFAMAKALAEHGVMTAVHKHYTVADWAEFVKSADKATLNNVMVSTGTSEADFQKTKDVMALSDELIFICIDIANGYSEHLVEYVQRVRAAFPDKVISAGNVVTGDMVEELILAGADIVKVGIGPGSVCTTRVKTGVGYPQLSAIIECADAAHGLGGRIIGDGGCTCPGDVAKAFGGGADFVMLGGMLAGHEEAGGELIVKDGETFMKFYGMSSKSAMDKHSGGVAGYRAAEGKTVLLPYRGSVHGTIQDILGGVRSTCTYVGAAELRELTKRTTFIRVQEQENNVYGRE.

Residue 108-131 (ADFQKTKDVMALSDELIFICIDIA) coordinates NADP(+). K(+) is bound by residues G181 and G183. C186 functions as the Thioimidate intermediate in the catalytic mechanism. Residue 216 to 239 (IIGDGGCTCPGDVAKAFGGGADFV) coordinates NADP(+).

This sequence belongs to the IMPDH/GMPR family. GuaC type 1 subfamily. In terms of assembly, homotetramer.

It carries out the reaction IMP + NH4(+) + NADP(+) = GMP + NADPH + 2 H(+). Catalyzes the irreversible NADPH-dependent deamination of GMP to IMP. It functions in the conversion of nucleobase, nucleoside and nucleotide derivatives of G to A nucleotides, and in maintaining the intracellular balance of A and G nucleotides. The chain is GMP reductase from Vibrio cholerae serotype O1 (strain ATCC 39541 / Classical Ogawa 395 / O395).